A 547-amino-acid polypeptide reads, in one-letter code: Cytochrome P450 monooxygenase oblB (547 aa).

2 consecutive transmembrane segments (helical) span residues 42–62 (GAVGAIYAIYISGLVIYRLFL) and 242–262 (FDMFHLGAVSLPLFMGMPWLI). Asn277 carries N-linked (GlcNAc...) asparagine glycosylation. The chain crosses the membrane as a helical span at residues 345-365 (VLIGSGTMTTAGTMGFLCYYI). Position 489 (Cys489) interacts with heme.

It belongs to the cytochrome P450 family. Heme serves as cofactor.

Its subcellular location is the membrane. It catalyses the reaction ophiobolin F + 4 reduced [NADPH--hemoprotein reductase] + 4 O2 = ophiobolin C + 4 oxidized [NADPH--hemoprotein reductase] + 6 H2O + 4 H(+). Its pathway is secondary metabolite biosynthesis; terpenoid biosynthesis. Its function is as follows. Cytochrome P450 monooxygenase; part of the gene cluster that mediates the biosynthesis of the sesterterpenes ophiobolins, fungal phytotoxins with potential anti-cancer activities. The first step of the pathway is performed by the sesterterpene synthase oblA that possesses both prenyl transferase and terpene cyclase activity, converting isopentenyl diphosphate and dimethylallyl diphosphate into geranylfarnesyl diphosphate (GFPP) and further converting GFPP into ophiobolin F, respectively. Other sesterterpenoids (C(25) terpenoids) are found as minor products of oblA. The cytochrome P450 monooxygenase oblB then catalyzes a four-step oxidative transformation of ophiobolin F to yield ophiobolin C. The function of the cytochrome P450 monooxygenase oblE has still to be determined. The sequence is that of Cytochrome P450 monooxygenase oblB from Emericella variicolor (Aspergillus stellatus).